Consider the following 1139-residue polypeptide: Liprin-alpha (1139 aa).

Coiled-coil stretches lie at residues 30–144 (PSDR…SLRM), 172–298 (EHHK…KNQI), 329–517 (IRDL…AQFQ), and 655–701 (QDAQ…EFYD). Disordered stretches follow at residues 700 to 720 (YDDQGISTRSSPRASPQLDNM) and 764 to 847 (NQFD…DRRK). Polar residues-rich tracts occupy residues 704–719 (GISTRSSPRASPQLDN) and 778–787 (PASSVASSTD). SAM domains lie at 867–933 (WNGP…MVSL), 952–1016 (NHEY…LKKV), and 1040–1109 (WSNE…LVND).

Belongs to the liprin family. Liprin-alpha subfamily. As to expression, detected in vulval muscle and other cells near the vulva; in neurons located in the lateral ganglion, posterior ganglion, ventral cord and lateral body; and in pharyngeal and body wall muscle cells.

It is found in the synapse. Functionally, may play a role in regulating the structure of the neuronal region, called the active zone, from which synaptic vesicles send neurotransmitter signals across the synapse. This may be in association with the liprin-beta protein hlb-1. In Caenorhabditis elegans, this protein is Liprin-alpha.